A 195-amino-acid polypeptide reads, in one-letter code: ATP-dependent Clp protease proteolytic subunit (195 aa).

Ser-98 (nucleophile) is an active-site residue. Residue His-123 is part of the active site.

It belongs to the peptidase S14 family. As to quaternary structure, fourteen ClpP subunits assemble into 2 heptameric rings which stack back to back to give a disk-like structure with a central cavity, resembling the structure of eukaryotic proteasomes.

It is found in the cytoplasm. The enzyme catalyses Hydrolysis of proteins to small peptides in the presence of ATP and magnesium. alpha-casein is the usual test substrate. In the absence of ATP, only oligopeptides shorter than five residues are hydrolyzed (such as succinyl-Leu-Tyr-|-NHMec, and Leu-Tyr-Leu-|-Tyr-Trp, in which cleavage of the -Tyr-|-Leu- and -Tyr-|-Trp bonds also occurs).. Cleaves peptides in various proteins in a process that requires ATP hydrolysis. Has a chymotrypsin-like activity. Plays a major role in the degradation of misfolded proteins. The chain is ATP-dependent Clp protease proteolytic subunit from Thermoanaerobacter pseudethanolicus (strain ATCC 33223 / 39E) (Clostridium thermohydrosulfuricum).